The sequence spans 307 residues: Small ribosomal subunit biogenesis GTPase RsgA (307 aa).

The disordered stretch occupies residues 1 to 21 (MPSEHPFSDGIPTPNPKETMN). A CP-type G domain is found at 85 to 242 (RQDAWKTKLI…LIDSPGLQEF (158 aa)). GTP-binding positions include 135-138 (NKAD) and 184-192 (GQSGMGKST). Residues Cys-266, Cys-271, His-273, and Cys-279 each coordinate Zn(2+).

The protein belongs to the TRAFAC class YlqF/YawG GTPase family. RsgA subfamily. Monomer. Associates with 30S ribosomal subunit, binds 16S rRNA. Zn(2+) serves as cofactor.

It localises to the cytoplasm. In terms of biological role, one of several proteins that assist in the late maturation steps of the functional core of the 30S ribosomal subunit. Helps release RbfA from mature subunits. May play a role in the assembly of ribosomal proteins into the subunit. Circularly permuted GTPase that catalyzes slow GTP hydrolysis, GTPase activity is stimulated by the 30S ribosomal subunit. In Neisseria meningitidis serogroup B (strain ATCC BAA-335 / MC58), this protein is Small ribosomal subunit biogenesis GTPase RsgA.